The following is a 129-amino-acid chain: Glycine cleavage system H protein (129 aa).

The Lipoyl-binding domain occupies Thr-24–Arg-106. The residue at position 65 (Lys-65) is an N6-lipoyllysine.

Belongs to the GcvH family. The glycine cleavage system is composed of four proteins: P, T, L and H. (R)-lipoate is required as a cofactor.

The glycine cleavage system catalyzes the degradation of glycine. The H protein shuttles the methylamine group of glycine from the P protein to the T protein. The protein is Glycine cleavage system H protein of Enterobacter sp. (strain 638).